The following is a 682-amino-acid chain: Glutamine--fructose-6-phosphate aminotransferase [isomerizing] 2 (682 aa).

Catalysis depends on Cys-2, which acts as the For GATase activity. The Glutamine amidotransferase type-2 domain occupies 2–288; that stretch reads CGIFAYMNYR…DDDIAAVADG (287 aa). Residue Ser-244 is modified to Phosphoserine. 2 consecutive SIS domains span residues 360–499 and 531–672; these read HLKE…DRIS and LALE…VDFP. Residues 377–378, 422–424, Thr-427, and His-578 each bind substrate; these read TS and SQS.

It catalyses the reaction D-fructose 6-phosphate + L-glutamine = D-glucosamine 6-phosphate + L-glutamate. Its pathway is nucleotide-sugar biosynthesis; UDP-N-acetyl-alpha-D-glucosamine biosynthesis; alpha-D-glucosamine 6-phosphate from D-fructose 6-phosphate: step 1/1. Controls the flux of glucose into the hexosamine pathway. Most likely involved in regulating the availability of precursors for N- and O-linked glycosylation of proteins. The chain is Glutamine--fructose-6-phosphate aminotransferase [isomerizing] 2 (GFPT2) from Bos taurus (Bovine).